Reading from the N-terminus, the 211-residue chain is Claudin-7 (211 aa).

The Cytoplasmic segment spans residues 1-7; the sequence is MANSGLQ. The helical transmembrane segment at 8–28 threads the bilayer; the sequence is LLGFSMAMLGWVGLIASTAIP. At 29-81 the chain is on the extracellular side; sequence QWQMSSYAGDNIITAQAMYKGLWMECVTQSTGMMSCKMYDSVLALPAATQATR. A helical transmembrane segment spans residues 82–102; the sequence is ALMIVSLVLGFLAMFVATMGM. At 103–119 the chain is on the cytoplasmic side; sequence KCTRCGGDDKVKKARIA. The chain crosses the membrane as a helical span at residues 120 to 140; it reads MTGGIIFIVAGLAALVACSWI. Topologically, residues 141–160 are extracellular; the sequence is GHQIVTDFYNPLTPMNIKYE. A helical membrane pass occupies residues 161–181; it reads FGPAIFIGWAGSALVLLGGAL. Residues 182-211 lie on the Cytoplasmic side of the membrane; it reads LSCSCPGSESKAAYRAPRSYPKSNSSKEYV. Residues 210-211 are interactions with TJP1, TJP2 and TJP3; that stretch reads YV.

It belongs to the claudin family. As to quaternary structure, directly interacts with TJP1/ZO-1, TJP2/ZO-2 and TJP3/ZO-3. The phosphorylated form interacts with EPCAM. In terms of processing, phosphorylated.

The protein localises to the cell membrane. Its subcellular location is the basolateral cell membrane. It localises to the cell junction. It is found in the tight junction. In terms of biological role, plays a major role in tight junction-specific obliteration of the intercellular space. This Rattus norvegicus (Rat) protein is Claudin-7 (Cldn7).